Reading from the N-terminus, the 320-residue chain is Fe-S cluster assembly protein dre2 (320 aa).

An N-terminal SAM-like domain region spans residues 1–130; that stretch reads MAKQTLLLSP…KPDIEEMQAV (130 aa). The tract at residues 131 to 213 is linker; the sequence is PLRLGRKNDH…DNLLDDSELS (83 aa). Residues 141 to 166 form a disordered region; the sequence is LAGAPSLEGSAAEHPFPPEVSEGKTA. [2Fe-2S] cluster-binding residues include Cys222, Cys233, Cys236, and Cys238. The segment at 222–238 is fe-S binding site A; it reads CRPKAGKRRRACKDCTC. 4 residues coordinate [4Fe-4S] cluster: Cys283, Cys286, Cys294, and Cys297. 2 consecutive short sequence motifs (cx2C motif) follow at residues 283 to 286 and 294 to 297; these read CGNC and CEGC. The interval 283–297 is fe-S binding site B; the sequence is CGNCSLGDAFRCEGC.

The protein belongs to the anamorsin family. In terms of assembly, monomer. Interacts with tah18. Interacts with mia40. It depends on [2Fe-2S] cluster as a cofactor. The cofactor is [4Fe-4S] cluster.

The protein resides in the cytoplasm. The protein localises to the mitochondrion intermembrane space. Its function is as follows. Component of the cytosolic iron-sulfur (Fe-S) protein assembly (CIA) machinery required for the maturation of extramitochondrial Fe-S proteins. Part of an electron transfer chain functioning in an early step of cytosolic Fe-S biogenesis, facilitating the de novo assembly of a [4Fe-4S] cluster on the scaffold complex cfd1-nbp35. Electrons are transferred to dre2 from NADPH via the FAD- and FMN-containing protein tah18. Tah18-dre2 are also required for the assembly of the diferric tyrosyl radical cofactor of ribonucleotide reductase (RNR), probably by providing electrons for reduction during radical cofactor maturation in the catalytic small subunit rnr2. The protein is Fe-S cluster assembly protein dre2 of Neosartorya fischeri (strain ATCC 1020 / DSM 3700 / CBS 544.65 / FGSC A1164 / JCM 1740 / NRRL 181 / WB 181) (Aspergillus fischerianus).